Here is a 409-residue protein sequence, read N- to C-terminus: Protein ROOT PRIMORDIUM DEFECTIVE 1 (409 aa).

Residues 47–386 (VRDHGYDNYM…RLAELVLMSP (340 aa)) enclose the PORR domain.

In terms of tissue distribution, expressed in roots, hypocotyls, cotyledons and shoot apex.

In terms of biological role, involved in pre-arranging the maintenance of the active cell proliferation during root primordium development. Does not seem to be involved in cell cycle progression. In Arabidopsis thaliana (Mouse-ear cress), this protein is Protein ROOT PRIMORDIUM DEFECTIVE 1 (RPD1).